The primary structure comprises 160 residues: Ribosomal RNA large subunit methyltransferase H (160 aa).

2 residues coordinate S-adenosyl-L-methionine: L76 and G108.

The protein belongs to the RNA methyltransferase RlmH family. As to quaternary structure, homodimer.

The protein resides in the cytoplasm. It carries out the reaction pseudouridine(1915) in 23S rRNA + S-adenosyl-L-methionine = N(3)-methylpseudouridine(1915) in 23S rRNA + S-adenosyl-L-homocysteine + H(+). Specifically methylates the pseudouridine at position 1915 (m3Psi1915) in 23S rRNA. The protein is Ribosomal RNA large subunit methyltransferase H of Rhodopseudomonas palustris (strain BisB5).